The primary structure comprises 198 residues: ATP-dependent Clp protease proteolytic subunit 1 (198 aa).

Ser98 acts as the Nucleophile in catalysis. His123 is a catalytic residue.

This sequence belongs to the peptidase S14 family. As to quaternary structure, fourteen ClpP subunits assemble into 2 heptameric rings which stack back to back to give a disk-like structure with a central cavity, resembling the structure of eukaryotic proteasomes.

The protein localises to the cytoplasm. The catalysed reaction is Hydrolysis of proteins to small peptides in the presence of ATP and magnesium. alpha-casein is the usual test substrate. In the absence of ATP, only oligopeptides shorter than five residues are hydrolyzed (such as succinyl-Leu-Tyr-|-NHMec, and Leu-Tyr-Leu-|-Tyr-Trp, in which cleavage of the -Tyr-|-Leu- and -Tyr-|-Trp bonds also occurs).. Its function is as follows. Cleaves peptides in various proteins in a process that requires ATP hydrolysis. Has a chymotrypsin-like activity. Plays a major role in the degradation of misfolded proteins. This Leptospira interrogans serogroup Icterohaemorrhagiae serovar copenhageni (strain Fiocruz L1-130) protein is ATP-dependent Clp protease proteolytic subunit 1.